The following is a 425-amino-acid chain: Histidine--tRNA ligase (425 aa).

This sequence belongs to the class-II aminoacyl-tRNA synthetase family. Homodimer.

It is found in the cytoplasm. It carries out the reaction tRNA(His) + L-histidine + ATP = L-histidyl-tRNA(His) + AMP + diphosphate + H(+). The polypeptide is Histidine--tRNA ligase (Shewanella oneidensis (strain ATCC 700550 / JCM 31522 / CIP 106686 / LMG 19005 / NCIMB 14063 / MR-1)).